Here is a 342-residue protein sequence, read N- to C-terminus: Protein-glutamate methylesterase/protein-glutamine glutaminase 1 (342 aa).

The Response regulatory domain occupies 3 to 121; the sequence is RVLVIDDSLF…NIREIGGELK (119 aa). At Asp54 the chain carries 4-aspartylphosphate. Residues 141–340 form the CheB-type methylesterase domain; it reads DSNARNVVLI…EKIVETIRAM (200 aa). Residues Ser153, His180, and Asp282 contribute to the active site.

The protein belongs to the CheB family. Phosphorylated by CheA. Phosphorylation of the N-terminal regulatory domain activates the methylesterase activity.

It localises to the cytoplasm. The enzyme catalyses [protein]-L-glutamate 5-O-methyl ester + H2O = L-glutamyl-[protein] + methanol + H(+). It catalyses the reaction L-glutaminyl-[protein] + H2O = L-glutamyl-[protein] + NH4(+). Functionally, involved in chemotaxis. Part of a chemotaxis signal transduction system that modulates chemotaxis in response to various stimuli. Catalyzes the demethylation of specific methylglutamate residues introduced into the chemoreceptors (methyl-accepting chemotaxis proteins or MCP) by CheR. Also mediates the irreversible deamidation of specific glutamine residues to glutamic acid. This chain is Protein-glutamate methylesterase/protein-glutamine glutaminase 1, found in Methanospirillum hungatei JF-1 (strain ATCC 27890 / DSM 864 / NBRC 100397 / JF-1).